Reading from the N-terminus, the 254-residue chain is Ribosomal RNA small subunit methyltransferase J (254 aa).

Residues 107–108 (RD), 123–124 (ER), and aspartate 177 contribute to the S-adenosyl-L-methionine site.

The protein belongs to the methyltransferase superfamily. RsmJ family.

The protein localises to the cytoplasm. The catalysed reaction is guanosine(1516) in 16S rRNA + S-adenosyl-L-methionine = N(2)-methylguanosine(1516) in 16S rRNA + S-adenosyl-L-homocysteine + H(+). Functionally, specifically methylates the guanosine in position 1516 of 16S rRNA. This Histophilus somni (strain 2336) (Haemophilus somnus) protein is Ribosomal RNA small subunit methyltransferase J.